The sequence spans 282 residues: 4-diphosphocytidyl-2-C-methyl-D-erythritol kinase (282 aa).

Residue Lys-11 is part of the active site. 93–103 (LVSAGLAGGSA) is a binding site for ATP. Asp-133 is an active-site residue.

This sequence belongs to the GHMP kinase family. IspE subfamily.

The catalysed reaction is 4-CDP-2-C-methyl-D-erythritol + ATP = 4-CDP-2-C-methyl-D-erythritol 2-phosphate + ADP + H(+). It participates in isoprenoid biosynthesis; isopentenyl diphosphate biosynthesis via DXP pathway; isopentenyl diphosphate from 1-deoxy-D-xylulose 5-phosphate: step 3/6. Functionally, catalyzes the phosphorylation of the position 2 hydroxy group of 4-diphosphocytidyl-2C-methyl-D-erythritol. In Ehrlichia canis (strain Jake), this protein is 4-diphosphocytidyl-2-C-methyl-D-erythritol kinase.